The following is a 387-amino-acid chain: 3-ketoacyl-CoA thiolase (387 aa).

Residue C91 is the Acyl-thioester intermediate of the active site. Active-site proton acceptor residues include H343 and C373.

The protein belongs to the thiolase-like superfamily. Thiolase family. As to quaternary structure, heterotetramer of two alpha chains (FadB) and two beta chains (FadA).

It localises to the cytoplasm. It catalyses the reaction an acyl-CoA + acetyl-CoA = a 3-oxoacyl-CoA + CoA. It participates in lipid metabolism; fatty acid beta-oxidation. Catalyzes the final step of fatty acid oxidation in which acetyl-CoA is released and the CoA ester of a fatty acid two carbons shorter is formed. This is 3-ketoacyl-CoA thiolase from Escherichia coli O6:K15:H31 (strain 536 / UPEC).